A 1299-amino-acid chain; its full sequence is MVDDIQVEKREKLIETKDKLLEEKLSALDPHEANVLRSQLETKRVATSFFRLFRFCTPLDVFLEILALFFAAVHGAALPMFTLVVGAIFNTFRDFTSYDLKGNEFQHKVNHLSLYFVYIGIGMLGSAFLESFLLVDRGEVLAGRYRKHYLSAVIRQNIAFYDKLGGGEVSTRIINDTNSIQEAISDKLGNVVQGIASFIAATVISFASQWKLACILLSAVGFMVITMGTGATFMAKYQLRSDAIYSQSGATVAEEALSAVRTTVAFGAQPHLAVKYEKVLDRVVKESKRSSYSLGVMLACIWASTFWVYALALWQGSREIVSGSADVGKIIVVITAMLLGSFQLGNIAPNVRFLVKGLTAASILNEAIDRVPVIDGQSIDKGIVPQTKAVGRIELKNVKFRYPSRPDVLVLSDFSLEVPAGSTVALVGASGSGKSTIVGILERFYLPLEGSVTLDGQEISDLNTRWLRQQIGYVQQEPVLFSESIYENISYGLIGTDIEFADEHVKEAKIIQACKDANAWDFIQTLSEGIQTNVGDRGFLLSGGQKQRIAIARAIVSDPKILLLDEATSALDTKSEGIVQDALDKAAEGRTTIVVAHRLSTIKDANKIVVMSKGNVIEQGTHNELIQREGPYKALVDAQRVTKAKSTNVEVLDIEALDISPLDSLNEKFNPKDVSTLSVHSAGTQTTQPPEYQENDIPGVRNPPHSTLMTNTKLVWGLNRKEWGYILIGSLASIILGYCYPAMAIITGQTTGSMVLPPSEYGKMRHVVNIMGWWYFFVGCISFMTAFITIAALSLASDKLVKNIRLALFRQLMRMDIAFFDHKNNTPGALTSILAKEAKMIEGLSGATLGQIQQSLVTLIGGIVTGIPFNWRIGLVATSVVPVMLVCGFVRVWVLTQLSDRAREVYERSGSMASEYTSAVRTVQSLTRELDVVVKYTKTVDSQIFSSRIAIARSALYYALSEGMTPWVVALVFWWGSTVMRRGEASVAGYMTVFMAIITGSQAAGQIFSYAPNMNSAKDAARNIYRILTATPSIDVWSEEGYVAPEESVRGDIEFRHVNFRYPTRPQVPVLQDLNLTVKKGQYIALVGASGCGKSTTIGLVERFYDPLAGQVLFDGKDLREYNLNALRSHIALVQQEPMLYSGTLRENILMGWSGPESEVTQEMIEDAARKANIHEFIMSLPDGYETLSGSRGSLLSGGQKQRIAIARALIRNPKVLLLDEATSALDSESEKVVQAALDAAAKGRTTIAVAHRLSTIQKADVIYVFSGGRIVEQGDHQSLLELNGWYAELVNLQGLGEI.

At 1 to 64 (MVDDIQVEKR…FCTPLDVFLE (64 aa)) the chain is on the cytoplasmic side. A helical transmembrane segment spans residues 65–85 (ILALFFAAVHGAALPMFTLVV). In terms of domain architecture, ABC transmembrane type-1 1 spans 65–356 (ILALFFAAVH…IAPNVRFLVK (292 aa)). The Extracellular portion of the chain corresponds to 86 to 114 (GAIFNTFRDFTSYDLKGNEFQHKVNHLSL). A helical membrane pass occupies residues 115–135 (YFVYIGIGMLGSAFLESFLLV). Topologically, residues 136–187 (DRGEVLAGRYRKHYLSAVIRQNIAFYDKLGGGEVSTRIINDTNSIQEAISDK) are cytoplasmic. Residues 188-208 (LGNVVQGIASFIAATVISFAS) traverse the membrane as a helical segment. At 209 to 214 (QWKLAC) the chain is on the extracellular side. Residues 215–235 (ILLSAVGFMVITMGTGATFMA) form a helical membrane-spanning segment. Residues 236-293 (KYQLRSDAIYSQSGATVAEEALSAVRTTVAFGAQPHLAVKYEKVLDRVVKESKRSSYS) lie on the Cytoplasmic side of the membrane. The chain crosses the membrane as a helical span at residues 294–314 (LGVMLACIWASTFWVYALALW). Topologically, residues 315 to 326 (QGSREIVSGSAD) are extracellular. Residues 327–347 (VGKIIVVITAMLLGSFQLGNI) traverse the membrane as a helical segment. Residues 348-725 (APNVRFLVKG…WGLNRKEWGY (378 aa)) are Cytoplasmic-facing. Residues 393 to 638 (IELKNVKFRY…EGPYKALVDA (246 aa)) form the ABC transporter 1 domain. 428-435 (GASGSGKS) is a binding site for ATP. Polar residues predominate over residues 681-690 (SAGTQTTQPP). The disordered stretch occupies residues 681–703 (SAGTQTTQPPEYQENDIPGVRNP). The helical transmembrane segment at 726–746 (ILIGSLASIILGYCYPAMAII) threads the bilayer. Residues 727–1016 (LIGSLASIIL…IFSYAPNMNS (290 aa)) enclose the ABC transmembrane type-1 2 domain. Topologically, residues 747 to 769 (TGQTTGSMVLPPSEYGKMRHVVN) are extracellular. Residues 770–790 (IMGWWYFFVGCISFMTAFITI) form a helical membrane-spanning segment. The Cytoplasmic segment spans residues 791–848 (AALSLASDKLVKNIRLALFRQLMRMDIAFFDHKNNTPGALTSILAKEAKMIEGLSGAT). The helical transmembrane segment at 849–869 (LGQIQQSLVTLIGGIVTGIPF) threads the bilayer. Residues 870–874 (NWRIG) lie on the Extracellular side of the membrane. Residues 875–895 (LVATSVVPVMLVCGFVRVWVL) traverse the membrane as a helical segment. Residues 896-954 (TQLSDRAREVYERSGSMASEYTSAVRTVQSLTRELDVVVKYTKTVDSQIFSSRIAIARS) lie on the Cytoplasmic side of the membrane. Residues 955-975 (ALYYALSEGMTPWVVALVFWW) form a helical membrane-spanning segment. The Extracellular portion of the chain corresponds to 976-987 (GSTVMRRGEASV). The helical transmembrane segment at 988–1008 (AGYMTVFMAIITGSQAAGQIF) threads the bilayer. Residues 1009–1299 (SYAPNMNSAK…LVNLQGLGEI (291 aa)) lie on the Cytoplasmic side of the membrane. The region spanning 1053-1293 (IEFRHVNFRY…NGWYAELVNL (241 aa)) is the ABC transporter 2 domain. 1088 to 1095 (GASGCGKS) lines the ATP pocket.

This sequence belongs to the ABC transporter superfamily. ABCB family. Multidrug resistance exporter (TC 3.A.1.201) subfamily.

The protein localises to the cell membrane. In terms of biological role, transports acidic acylated and non-acylated sophorolipids (SLs) into the extracellular space, where they can be lactonized by lactone esterase. This is Sophorolipid transporter (mdr) from Starmerella bombicola (Yeast).